A 75-amino-acid polypeptide reads, in one-letter code: Small ribosomal subunit protein bS21B (75 aa).

Over residues 33–52 the composition is skewed to basic and acidic residues; sequence RRSYEKPSERRAREKAEAVR. Positions 33 to 75 are disordered; it reads RRSYEKPSERRAREKAEAVRRARKLARKQAQREGLLPGKKRAA.

The protein belongs to the bacterial ribosomal protein bS21 family.

The sequence is that of Small ribosomal subunit protein bS21B from Chelativorans sp. (strain BNC1).